Consider the following 81-residue polypeptide: DNA-directed RNA polymerase subunit Rpo6 (81 aa).

This sequence belongs to the archaeal Rpo6/eukaryotic RPB6 RNA polymerase subunit family. In terms of assembly, part of the RNA polymerase complex.

The protein resides in the cytoplasm. The enzyme catalyses RNA(n) + a ribonucleoside 5'-triphosphate = RNA(n+1) + diphosphate. Functionally, DNA-dependent RNA polymerase (RNAP) catalyzes the transcription of DNA into RNA using the four ribonucleoside triphosphates as substrates. In Thermofilum pendens (strain DSM 2475 / Hrk 5), this protein is DNA-directed RNA polymerase subunit Rpo6.